The chain runs to 279 residues: Putative polysaccharide deacetylase YxkH (279 aa).

The first 19 residues, 1-19, serve as a signal peptide directing secretion; that stretch reads MKRLFLSIFLLGSCLALAA. Cys20 is lipidated: N-palmitoyl cysteine. Cys20 is lipidated: S-diacylglycerol cysteine. A disordered region spans residues 29–51; sequence QPMPKAEQKKPEKKAVQVQKKED. The span at 34–51 shows a compositional bias: basic and acidic residues; it reads AEQKKPEKKAVQVQKKED. The NodB homology domain occupies 119–279; sequence KCVLITFDDG…AFGAYIESMK (161 aa).

Belongs to the polysaccharide deacetylase family.

It localises to the cell membrane. The polypeptide is Putative polysaccharide deacetylase YxkH (yxkH) (Bacillus subtilis (strain 168)).